Here is a 155-residue protein sequence, read N- to C-terminus: Aspartate carbamoyltransferase regulatory chain (155 aa).

Positions 110, 115, 139, and 142 each coordinate Zn(2+).

Belongs to the PyrI family. Contains catalytic and regulatory chains. Zn(2+) serves as cofactor.

In terms of biological role, involved in allosteric regulation of aspartate carbamoyltransferase. The sequence is that of Aspartate carbamoyltransferase regulatory chain from Yersinia pseudotuberculosis serotype IB (strain PB1/+).